Consider the following 182-residue polypeptide: Flightin (182 aa).

The span at 1–15 (MADEEDPWGFDDGGE) shows a compositional bias: acidic residues. A disordered region spans residues 1–76 (MADEEDPWGF…PPPPEDDGYR (76 aa)).

In terms of processing, several forms of flightin are thought to be produced through post-translational modifications, possibly by phosphorylation. Found only in indirect flight muscles (IFM).

In terms of biological role, possibly involved in the regulation of flight muscles contraction, possibly by modulating actin-myosin interaction. The polypeptide is Flightin (fln) (Drosophila melanogaster (Fruit fly)).